A 189-amino-acid polypeptide reads, in one-letter code: Elongation factor P-like protein (189 aa).

Belongs to the elongation factor P family.

In Vibrio atlanticus (strain LGP32) (Vibrio splendidus (strain Mel32)), this protein is Elongation factor P-like protein.